A 451-amino-acid polypeptide reads, in one-letter code: F-box only protein 47 (451 aa).

An F-box domain is found at 41–91; sequence LGNFKVLPLEILHIILRYLSVKDIGMLSMVSKTVSQHIINYISTSSGSRRL.

Part of a SCF (SKP1-cullin-F-box) protein ligase complex.

Probably recognizes and binds to some phosphorylated proteins and promotes their ubiquitination and degradation. The sequence is that of F-box only protein 47 (Fbxo47) from Mus musculus (Mouse).